We begin with the raw amino-acid sequence, 492 residues long: Bifunctional purine biosynthesis protein PurH (492 aa).

One can recognise an MGS-like domain in the interval 1 to 144 (MKKAILSVSN…KNFKHVITVV (144 aa)).

The protein belongs to the PurH family.

It catalyses the reaction (6R)-10-formyltetrahydrofolate + 5-amino-1-(5-phospho-beta-D-ribosyl)imidazole-4-carboxamide = 5-formamido-1-(5-phospho-D-ribosyl)imidazole-4-carboxamide + (6S)-5,6,7,8-tetrahydrofolate. The catalysed reaction is IMP + H2O = 5-formamido-1-(5-phospho-D-ribosyl)imidazole-4-carboxamide. The protein operates within purine metabolism; IMP biosynthesis via de novo pathway; 5-formamido-1-(5-phospho-D-ribosyl)imidazole-4-carboxamide from 5-amino-1-(5-phospho-D-ribosyl)imidazole-4-carboxamide (10-formyl THF route): step 1/1. It participates in purine metabolism; IMP biosynthesis via de novo pathway; IMP from 5-formamido-1-(5-phospho-D-ribosyl)imidazole-4-carboxamide: step 1/1. This Staphylococcus saprophyticus subsp. saprophyticus (strain ATCC 15305 / DSM 20229 / NCIMB 8711 / NCTC 7292 / S-41) protein is Bifunctional purine biosynthesis protein PurH.